Reading from the N-terminus, the 216-residue chain is Small ribosomal subunit protein uS5 (216 aa).

The disordered stretch occupies residues Met-1–Pro-55. Over residues Leu-20–Asn-31 the composition is skewed to polar residues. The S5 DRBM domain occupies Phe-57–Val-120.

It belongs to the universal ribosomal protein uS5 family. As to quaternary structure, part of the 30S ribosomal subunit. Contacts proteins S4 and S8.

Its function is as follows. With S4 and S12 plays an important role in translational accuracy. Functionally, located at the back of the 30S subunit body where it stabilizes the conformation of the head with respect to the body. This Mesomycoplasma hyopneumoniae (strain 7448) (Mycoplasma hyopneumoniae) protein is Small ribosomal subunit protein uS5.